The sequence spans 236 residues: 2-C-methyl-D-erythritol 4-phosphate cytidylyltransferase (236 aa).

It belongs to the IspD/TarI cytidylyltransferase family. IspD subfamily. In terms of assembly, homodimer.

It catalyses the reaction 2-C-methyl-D-erythritol 4-phosphate + CTP + H(+) = 4-CDP-2-C-methyl-D-erythritol + diphosphate. Its pathway is isoprenoid biosynthesis; isopentenyl diphosphate biosynthesis via DXP pathway; isopentenyl diphosphate from 1-deoxy-D-xylulose 5-phosphate: step 2/6. Its function is as follows. Catalyzes the formation of 4-diphosphocytidyl-2-C-methyl-D-erythritol from CTP and 2-C-methyl-D-erythritol 4-phosphate (MEP). This chain is 2-C-methyl-D-erythritol 4-phosphate cytidylyltransferase, found in Buchnera aphidicola subsp. Schizaphis graminum (strain Sg).